The sequence spans 470 residues: 4-O-methyltransferase 1 (470 aa).

Residues 274 to 275 (GG), D297, 328 to 329 (DC), and K344 each bind S-adenosyl-L-methionine. The active-site Proton acceptor is H348.

Belongs to the class I-like SAM-binding methyltransferase superfamily. Cation-independent O-methyltransferase family. COMT subfamily.

In terms of biological role, S-adenosyl-L-methionine-dependent methyltransferase that preferentially catalyzes the methylation of 4-OH phenolic compounds like coniferyl alcohol, vanillyl alcohol and ferrulic acid. May play a role in promoting lignin degradation by methylating and inactivating free-hydroxyl phenolic compounds, products of lignin cleavage which are known inhibitors of lignin peroxidases. The chain is 4-O-methyltransferase 1 from Phanerochaete chrysosporium (strain RP-78 / ATCC MYA-4764 / FGSC 9002) (White-rot fungus).